A 376-amino-acid chain; its full sequence is Palmitoyltransferase PFA4 (376 aa).

At 1–11 the chain is on the cytoplasmic side; that stretch reads MPVKLKWPWLG. Residues 12-32 form a helical membrane-spanning segment; sequence IAIPSFLIASIGYCAHYFILL. The Lumenal portion of the chain corresponds to 33-40; it reads NFLSLRKQ. The helical transmembrane segment at 41-61 threads the bilayer; the sequence is LWYQFCQTMIWLSYYLAIYTP. The Cytoplasmic segment spans residues 62-122; the sequence is PGKPPTNFKP…NCVGYNNFPH (61 aa). The DHHC domain maps to 78 to 128; the sequence is VYCKKCKCYKPERSHHCKTCNQCVLMMDHHCPWTMNCVGYNNFPHFIRFLF. Catalysis depends on Cys-108, which acts as the S-palmitoyl cysteine intermediate. Residues 123-143 traverse the membrane as a helical segment; it reads FIRFLFWVIVGTTSLAIFLTT. Residues 144 to 163 are Lumenal-facing; sequence RIHSIWVHRSSPSYLYYKSE. Residues 164-184 traverse the membrane as a helical segment; that stretch reads LIFLTILTPLNAFILLTISIL. The Cytoplasmic segment spans residues 185–376; the sequence is MIRCLFNQIF…EDFGVDVDVE (192 aa).

Belongs to the DHHC palmitoyltransferase family. PFA4 subfamily.

It is found in the endoplasmic reticulum membrane. It catalyses the reaction L-cysteinyl-[protein] + hexadecanoyl-CoA = S-hexadecanoyl-L-cysteinyl-[protein] + CoA. Mediates the reversible addition of palmitate to target proteins, thereby regulating their membrane association and biological function. This chain is Palmitoyltransferase PFA4, found in Candida glabrata (strain ATCC 2001 / BCRC 20586 / JCM 3761 / NBRC 0622 / NRRL Y-65 / CBS 138) (Yeast).